A 369-amino-acid polypeptide reads, in one-letter code: Glutamate 5-kinase (369 aa).

Lys-9 is an ATP binding site. Positions 49, 136, and 148 each coordinate substrate. ATP contacts are provided by residues Thr-168–Asp-169 and Thr-210–Lys-216. Residues Arg-275 to Trp-355 form the PUA domain.

The protein belongs to the glutamate 5-kinase family.

The protein resides in the cytoplasm. The enzyme catalyses L-glutamate + ATP = L-glutamyl 5-phosphate + ADP. It functions in the pathway amino-acid biosynthesis; L-proline biosynthesis; L-glutamate 5-semialdehyde from L-glutamate: step 1/2. In terms of biological role, catalyzes the transfer of a phosphate group to glutamate to form L-glutamate 5-phosphate. This chain is Glutamate 5-kinase, found in Neisseria meningitidis serogroup C / serotype 2a (strain ATCC 700532 / DSM 15464 / FAM18).